The following is a 522-amino-acid chain: Vicilin-like seed storage protein At4g36700 (522 aa).

The N-terminal stretch at methionine 1–alanine 25 is a signal peptide. 5 N-linked (GlcNAc...) asparagine glycosylation sites follow: asparagine 206, asparagine 303, asparagine 341, asparagine 374, and asparagine 414. A Cupin type-1 domain is found at phenylalanine 265–aspartate 421. The tract at residues aspartate 457–serine 522 is disordered. Composition is skewed to basic and acidic residues over residues arginine 466–arginine 491 and glutamate 501–glutamate 515.

The protein belongs to the 7S seed storage protein family.

Functionally, seed storage protein. This is Vicilin-like seed storage protein At4g36700 from Arabidopsis thaliana (Mouse-ear cress).